We begin with the raw amino-acid sequence, 626 residues long: Glutamate--cysteine ligase (626 aa).

It belongs to the glutamate--cysteine ligase type 3 family. As to quaternary structure, monomer.

It catalyses the reaction L-cysteine + L-glutamate + ATP = gamma-L-glutamyl-L-cysteine + ADP + phosphate + H(+). It participates in sulfur metabolism; glutathione biosynthesis; glutathione from L-cysteine and L-glutamate: step 1/2. Its function is as follows. An essential enzyme in glutathione (L-gamma-glutamyl-L-cysteinylglycine, GSH) biosynthesis, GSH is essential for growth and differentiation to prespore stage. Catalyzes the condensation of glutamate to cysteine. This Dictyostelium discoideum (Social amoeba) protein is Glutamate--cysteine ligase (gcsA).